The sequence spans 157 residues: MSKPVILTYEGLKKLEEELEYLKTVKRAEVAEKIKQARAFGDLSENSEYDEAKNEQAFIEGRIATLEAMLKNAKVIDEEDIKLDEVSIGCTVKVFDETYNEEVEYTIVGSAEADPMNNKISDESPIGKALLGKKVGETISVEVPAGVIKLKILEIRR.

The stretch at Leu-12 to Lys-74 forms a coiled coil.

This sequence belongs to the GreA/GreB family.

Its function is as follows. Necessary for efficient RNA polymerase transcription elongation past template-encoded arresting sites. The arresting sites in DNA have the property of trapping a certain fraction of elongating RNA polymerases that pass through, resulting in locked ternary complexes. Cleavage of the nascent transcript by cleavage factors such as GreA or GreB allows the resumption of elongation from the new 3'terminus. GreA releases sequences of 2 to 3 nucleotides. The polypeptide is Transcription elongation factor GreA (Caldanaerobacter subterraneus subsp. tengcongensis (strain DSM 15242 / JCM 11007 / NBRC 100824 / MB4) (Thermoanaerobacter tengcongensis)).